A 358-amino-acid polypeptide reads, in one-letter code: Biotin synthase (358 aa).

Residues 47-306 (KNNSKIKLCA…ALYKIIMPYA (260 aa)) enclose the Radical SAM core domain. Positions 65, 69, and 72 each coordinate [4Fe-4S] cluster. [2Fe-2S] cluster contacts are provided by serine 142, cysteine 174, cysteine 233, and arginine 309.

Belongs to the radical SAM superfamily. Biotin synthase family. Homodimer. [4Fe-4S] cluster is required as a cofactor. Requires [2Fe-2S] cluster as cofactor.

It catalyses the reaction (4R,5S)-dethiobiotin + (sulfur carrier)-SH + 2 reduced [2Fe-2S]-[ferredoxin] + 2 S-adenosyl-L-methionine = (sulfur carrier)-H + biotin + 2 5'-deoxyadenosine + 2 L-methionine + 2 oxidized [2Fe-2S]-[ferredoxin]. It functions in the pathway cofactor biosynthesis; biotin biosynthesis; biotin from 7,8-diaminononanoate: step 2/2. In terms of biological role, catalyzes the conversion of dethiobiotin (DTB) to biotin by the insertion of a sulfur atom into dethiobiotin via a radical-based mechanism. This Methanocaldococcus jannaschii (strain ATCC 43067 / DSM 2661 / JAL-1 / JCM 10045 / NBRC 100440) (Methanococcus jannaschii) protein is Biotin synthase.